Reading from the N-terminus, the 444-residue chain is Methylenetetrahydrofolate--tRNA-(uracil-5-)-methyltransferase TrmFO (444 aa).

Residue 10 to 15 (GAGLAG) participates in FAD binding.

Belongs to the MnmG family. TrmFO subfamily. FAD serves as cofactor.

It is found in the cytoplasm. The enzyme catalyses uridine(54) in tRNA + (6R)-5,10-methylene-5,6,7,8-tetrahydrofolate + NADH + H(+) = 5-methyluridine(54) in tRNA + (6S)-5,6,7,8-tetrahydrofolate + NAD(+). The catalysed reaction is uridine(54) in tRNA + (6R)-5,10-methylene-5,6,7,8-tetrahydrofolate + NADPH + H(+) = 5-methyluridine(54) in tRNA + (6S)-5,6,7,8-tetrahydrofolate + NADP(+). Functionally, catalyzes the folate-dependent formation of 5-methyl-uridine at position 54 (M-5-U54) in all tRNAs. This Streptococcus agalactiae serotype Ia (strain ATCC 27591 / A909 / CDC SS700) protein is Methylenetetrahydrofolate--tRNA-(uracil-5-)-methyltransferase TrmFO.